We begin with the raw amino-acid sequence, 100 residues long: Small ribosomal subunit protein uS14c (100 aa).

Belongs to the universal ribosomal protein uS14 family. As to quaternary structure, part of the 30S ribosomal subunit.

It is found in the plastid. Its subcellular location is the chloroplast. Functionally, binds 16S rRNA, required for the assembly of 30S particles. The chain is Small ribosomal subunit protein uS14c from Cryptomeria japonica (Japanese cedar).